The following is a 516-amino-acid chain: Thioredoxin reductase 2, mitochondrial (516 aa).

62–79 provides a ligand contact to FAD; sequence DYVKPTPVGTKWGIGGTC. Cys79 and Cys84 are oxidised to a cystine. Catalysis depends on His489, which acts as the Proton acceptor.

This sequence belongs to the class-I pyridine nucleotide-disulfide oxidoreductase family. Homodimer. FAD serves as cofactor.

It is found in the mitochondrion. It catalyses the reaction [thioredoxin]-dithiol + NADP(+) = [thioredoxin]-disulfide + NADPH + H(+). Its function is as follows. Thioredoxin system is a major player in glutathione metabolism, due to the demonstrated absence of a glutathione reductase. Functionally interacts with the Sod/Cat reactive oxidation species (ROS) defense system and thereby has a role in preadult development and life span. Lack of a glutathione reductase suggests antioxidant defense in Drosophila, and probably in related insects, differs fundamentally from that in other organisms. This chain is Thioredoxin reductase 2, mitochondrial, found in Drosophila melanogaster (Fruit fly).